We begin with the raw amino-acid sequence, 249 residues long: Deoxyribose-phosphate aldolase (249 aa).

Residue D109 is the Proton donor/acceptor of the active site. The active-site Schiff-base intermediate with acetaldehyde is the K171. K200 acts as the Proton donor/acceptor in catalysis.

This sequence belongs to the DeoC/FbaB aldolase family. DeoC type 1 subfamily.

Its subcellular location is the cytoplasm. It carries out the reaction 2-deoxy-D-ribose 5-phosphate = D-glyceraldehyde 3-phosphate + acetaldehyde. The protein operates within carbohydrate degradation; 2-deoxy-D-ribose 1-phosphate degradation; D-glyceraldehyde 3-phosphate and acetaldehyde from 2-deoxy-alpha-D-ribose 1-phosphate: step 2/2. Its function is as follows. Catalyzes a reversible aldol reaction between acetaldehyde and D-glyceraldehyde 3-phosphate to generate 2-deoxy-D-ribose 5-phosphate. This Klebsiella pneumoniae subsp. pneumoniae (strain ATCC 700721 / MGH 78578) protein is Deoxyribose-phosphate aldolase.